Consider the following 231-residue polypeptide: Phosphatidylserine decarboxylase proenzyme (231 aa).

The Schiff-base intermediate with substrate; via pyruvic acid role is filled by S188. S188 is modified (pyruvic acid (Ser); by autocatalysis).

Belongs to the phosphatidylserine decarboxylase family. PSD-A subfamily. In terms of assembly, heterodimer of a large membrane-associated beta subunit and a small pyruvoyl-containing alpha subunit. The cofactor is pyruvate. Post-translationally, is synthesized initially as an inactive proenzyme. Formation of the active enzyme involves a self-maturation process in which the active site pyruvoyl group is generated from an internal serine residue via an autocatalytic post-translational modification. Two non-identical subunits are generated from the proenzyme in this reaction, and the pyruvate is formed at the N-terminus of the alpha chain, which is derived from the carboxyl end of the proenzyme. The post-translation cleavage follows an unusual pathway, termed non-hydrolytic serinolysis, in which the side chain hydroxyl group of the serine supplies its oxygen atom to form the C-terminus of the beta chain, while the remainder of the serine residue undergoes an oxidative deamination to produce ammonia and the pyruvoyl prosthetic group on the alpha chain.

The protein resides in the cell membrane. It carries out the reaction a 1,2-diacyl-sn-glycero-3-phospho-L-serine + H(+) = a 1,2-diacyl-sn-glycero-3-phosphoethanolamine + CO2. It participates in phospholipid metabolism; phosphatidylethanolamine biosynthesis; phosphatidylethanolamine from CDP-diacylglycerol: step 2/2. Functionally, catalyzes the formation of phosphatidylethanolamine (PtdEtn) from phosphatidylserine (PtdSer). The sequence is that of Phosphatidylserine decarboxylase proenzyme from Rickettsia felis (strain ATCC VR-1525 / URRWXCal2) (Rickettsia azadi).